The primary structure comprises 463 residues: Lysosomal proton-coupled steroid conjugate and bile acid symporter SLC46A3 (463 aa).

The N-terminal stretch at 1–20 is a signal peptide; that stretch reads MKILFVEPAIFLSAFAMTLT. Over 21 to 73 the chain is Extracellular; it reads SPLTTQYVYRRIWEETGNYTFSSDSNISECEKNKSSPIFAFQEEVQKKVSRFN. Residues N38, N46, and N53 are each glycosylated (N-linked (GlcNAc...) asparagine). A helical membrane pass occupies residues 74–94; sequence LQMDISGLIPGLVSTFILLSI. At 95–101 the chain is on the cytoplasmic side; the sequence is SDHYGRK. The helical transmembrane segment at 102-124 threads the bilayer; sequence FPMILSSVGALATSVWLCLLCYF. Over 125–133 the chain is Extracellular; it reads AFPFQLLIA. A helical membrane pass occupies residues 134–156; it reads STFIGAFCGNYTTFWGACFAYIV. The Cytoplasmic segment spans residues 157–170; that stretch reads DQCKEHKQKTIRIA. Residues 171 to 191 traverse the membrane as a helical segment; that stretch reads VIDFLLGLVTGLTGLSSGYFI. The Extracellular portion of the chain corresponds to 192–197; the sequence is RELGFG. A helical membrane pass occupies residues 198–218; that stretch reads WSFLIIAASLAVNLIYILFFL. Over 219–261 the chain is Cytoplasmic; that stretch reads GDPVKECSSQNVTMSCSEGFKNLFYRTYMLFKNASGKRRFLLC. Residues 262 to 282 traverse the membrane as a helical segment; sequence LLLFTTITYFFVVIGIAPIFI. At 283 to 294 the chain is on the extracellular side; sequence LYELDSPLCWNE. The helical transmembrane segment at 295 to 315 threads the bilayer; it reads VFIGYGSALGSASFLTSFLGI. Over 316-324 the chain is Cytoplasmic; sequence WLFSYCMED. A helical transmembrane segment spans residues 325 to 345; the sequence is IHMAFIGIFTTMTGMVMTAFA. Residues 346 to 347 lie on the Extracellular side of the membrane; that stretch reads ST. The helical transmembrane segment at 348–368 threads the bilayer; sequence TLMMFLARVPFLFTIVPFSVL. The Cytoplasmic segment spans residues 369–382; it reads RSMLSKVVRSTEQG. A helical transmembrane segment spans residues 383 to 403; the sequence is ILFACIAFLETLGGVTAVSTF. Residues 404–415 are Extracellular-facing; the sequence is NGIYSATVAWYP. Residues 416–436 traverse the membrane as a helical segment; that stretch reads GFTFLLSAGLLLLPAISLCVV. The Cytoplasmic segment spans residues 437-463; sequence KCTSWNEGSYELLIQEESSEDASDRAC. The Tyrosine-based lysosomal-sorting motif motif lies at 446-449; the sequence is YELL.

The protein belongs to the major facilitator superfamily. SLC46A family.

The protein localises to the lysosome membrane. The enzyme catalyses estrone 3-sulfate(out) + n H(+)(out) = estrone 3-sulfate(in) + n H(+)(in). It carries out the reaction 25-hydroxyvitamin D3 sulfate(out) + n H(+)(out) = 25-hydroxyvitamin D3 sulfate(in) + n H(+)(in). It catalyses the reaction cholate(out) + n H(+)(out) = cholate(in) + n H(+)(in). The catalysed reaction is glycocholate(out) + n H(+)(out) = glycocholate(in) + n H(+)(in). The enzyme catalyses taurocholate(out) + n H(+)(out) = taurocholate(in) + n H(+)(in). It carries out the reaction dehydroepiandrosterone 3-sulfate(out) + n H(+)(out) = dehydroepiandrosterone 3-sulfate(in) + n H(+)(in). It catalyses the reaction N-acetyl-D-muramoyl-L-alanyl-D-isoglutamine(out) + n H(+)(out) = N-acetyl-D-muramoyl-L-alanyl-D-isoglutamine(in) + n H(+)(in). The catalysed reaction is 2',3'-cGAMP(out) + n H(+)(out) = 2',3'-cGAMP(in) + n H(+)(in). Functionally, lysosomal proton-coupled steroid conjugate and bile acid transporter. Preferentially recognizes lipophilic steroid conjugates or bile acis as endogenous substrates and seems to mediate escape from lysosomes to the cytoplasm. Modulates hepatic cytosolic copper homeostasis, maybe acting as a lysosomal copper transporter and sequestering copper ions in the lysosome. Delivers pathogen-associated molecular patterns to cytosolic pattern recognition receptors as part of the innate immune response to microbes. Selectively transports bacterial muramyl dipeptide (MDP) into the cytosol for recognition by NOD2, triggering inflammatory responses. Likely acts as a redundant importer of cyclic GMP-AMP dinucleotides (cGAMPs) in monocyte and macrophage cell lineages. The transport mechanism, its electrogenicity and stoichiometry remain to be elucidated. This Pongo abelii (Sumatran orangutan) protein is Lysosomal proton-coupled steroid conjugate and bile acid symporter SLC46A3 (SLC46A3).